An 841-amino-acid chain; its full sequence is Toll-like receptor 4 (841 aa).

Positions Met-1–Ser-23 are cleaved as a signal peptide. Residues Glu-24–Glu-632 are Extracellular-facing. A disulfide bridge links Cys-29 with Cys-40. N-linked (GlcNAc...) asparagine glycosylation occurs at Asn-35. LRR repeat units lie at residues Ser-55–Ser-76, Glu-79–Gly-100, Tyr-103–Gly-124, Ser-127–His-148, Thr-151–Ser-172, Asn-176–Val-197, and Asn-205–Lys-225. 4 N-linked (GlcNAc...) asparagine glycosylation sites follow: Asn-205, Asn-238, Asn-282, and Asn-309. The cysteines at positions 281 and 306 are disulfide-linked. LRR repeat units lie at residues Asn-374–Glu-395, Lys-400–Glu-422, Gln-423–Leu-444, Asn-448–Gly-469, Ser-472–Leu-495, Asn-497–Ser-518, Arg-521–Pro-542, and Ser-545–Pro-568. A disulfide bond links Cys-390 and Cys-391. An N-linked (GlcNAc...) asparagine glycan is attached at Asn-526. Asn-575 is a glycosylation site (N-linked (GlcNAc...) asparagine). One can recognise an LRRCT domain in the interval Asn-579–Ile-630. 2 disulfides stabilise this stretch: Cys-583–Cys-609 and Cys-585–Cys-628. An N-linked (GlcNAc...) asparagine glycan is attached at Asn-625. The helical transmembrane segment at Ala-633–Tyr-653 threads the bilayer. The Cytoplasmic portion of the chain corresponds to Lys-654 to Thr-841. The TIR domain maps to Ser-673–Leu-816.

This sequence belongs to the Toll-like receptor family. As to quaternary structure, belongs to the lipopolysaccharide (LPS) receptor, a multi-protein complex containing at least CD14, LY96 and TLR4. Binding to bacterial LPS leads to homodimerization. Interacts with LY96 via the extracellular domain. Interacts with MYD88 and TIRAP via their respective TIR domains. Interacts with NOX4. Interacts with CNPY3 and HSP90B1; this interaction is required for proper folding in the endoplasmic reticulum. Interacts with MAP3K21; this interaction leads to negative regulation of TLR4 signaling. Interacts with CD36, following CD36 stimulation by oxLDL or amyloid-beta 42, and forms a heterodimer with TLR6. The trimeric complex is internalized and triggers inflammatory response. LYN kinase activity facilitates TLR4-TLR6 heterodimerization and signal initiation. Interacts with TICAM1 in response to LPS in a WDFY1-dependent manner. Interacts with WDFY1 in response to LPS. Interacts with SMPDL3B. Interacts with CEACAM1; upon lipopolysaccharide stimulation, forms a complex including TLR4 and the phosphorylated form of SYK and CEACAM1, which in turn, recruits PTPN6 that dephosphorylates SYK, reducing the production of reactive oxygen species (ROS) and lysosome disruption, which in turn, reduces the activity of the inflammasome. Interacts with RFTN1; the interaction occurs in response to lipopolysaccharide stimulation. Interacts with SCIMP; the interaction occurs in response to lipopolysaccharide stimulation and is enhanced by phosphorylation of SCIMP by LYN. This interaction facilitates the phosphorylation of TLR4 by LYN which elicits a selective cytokine response in macrophages. Interacts with TRAF3IP3. Interacts with TREM1; this interaction enhances TLR4-mediated inflammatory response. Interacts with ZG16B/PAUF. Interacts with CD82; this interaction inhibits TLR4-mediated signaling pathway. Post-translationally, phosphorylated on tyrosine residues by LYN after binding lipopolysaccharide. In terms of processing, ubiquitinated by RNF128 via 'Lys-28'-linked polyubiquitin chains, leading to proteasomal degradation.

Its subcellular location is the cell membrane. The protein resides in the early endosome. It localises to the cell projection. The protein localises to the ruffle. Functionally, transmembrane receptor that functions as a pattern recognition receptor recognizing pathogen- and damage-associated molecular patterns (PAMPs and DAMPs) to induce innate immune responses via downstream signaling pathways. At the plasma membrane, cooperates with LY96 to mediate the innate immune response to bacterial lipopolysaccharide (LPS). Also involved in LPS-independent inflammatory responses triggered by free fatty acids, such as palmitate, and Ni(2+). Mechanistically, acts via MYD88, TIRAP and TRAF6, leading to NF-kappa-B activation, cytokine secretion and the inflammatory response. Alternatively, CD14-mediated TLR4 internalization via endocytosis is associated with the initiation of a MYD88-independent signaling via the TICAM1-TBK1-IRF3 axis leading to type I interferon production. In addition to the secretion of proinflammatory cytokines, initiates the activation of NLRP3 inflammasome and formation of a positive feedback loop between autophagy and NF-kappa-B signaling cascade. In complex with TLR6, promotes inflammation in monocytes/macrophages by associating with TLR6 and the receptor CD86. Upon ligand binding, such as oxLDL or amyloid-beta 42, the TLR4:TLR6 complex is internalized and triggers inflammatory response, leading to NF-kappa-B-dependent production of CXCL1, CXCL2 and CCL9 cytokines, via MYD88 signaling pathway, and CCL5 cytokine, via TICAM1 signaling pathway. In myeloid dendritic cells, vesicular stomatitis virus glycoprotein G but not LPS promotes the activation of IRF7, leading to type I IFN production in a CD14-dependent manner. This Sus scrofa (Pig) protein is Toll-like receptor 4 (TLR4).